Consider the following 1247-residue polypeptide: E3 ubiquitin-protein ligase hecw-1 (1247 aa).

In terms of domain architecture, WW 1 spans 602–635 (TPPESHWKTYLDAKKRKFYVNHVTKETRWTKPDT). The interval 633-659 (PDTLNNNHIEPETPVHKRLSDRSASPR) is disordered. Residues 641–653 (IEPETPVHKRLSD) show a composition bias toward basic and acidic residues. Residues 745–777 (QPLPSGWECITMNNRTVFLNHANKETSFYDPRI) enclose the WW 2 domain. Positions 914–1247 (DPFVLKKSRL…IVNGMSYSIE (334 aa)) constitute an HECT domain. The active-site Glycyl thioester intermediate is C1215.

Expressed in the nervous system throughout the body. In the anterior ganglion, expression is limited to the two lateral outer labial neurons OLLL and OLLR.

The protein localises to the cytoplasm. The enzyme catalyses S-ubiquitinyl-[E2 ubiquitin-conjugating enzyme]-L-cysteine + [acceptor protein]-L-lysine = [E2 ubiquitin-conjugating enzyme]-L-cysteine + N(6)-ubiquitinyl-[acceptor protein]-L-lysine.. Its pathway is protein modification; protein ubiquitination. Its function is as follows. E3 ubiquitin-protein ligase. Functions in the OLL neurons in the anterior ganglion to inhibit avoidance to microbial pathogens such as P.aeruginosa although worms do display avoidance behavior, vacating a P.aeruginosa lawn within 24 hours. Likely to act by inhibiting the neuropeptide receptor npr-1. The sequence is that of E3 ubiquitin-protein ligase hecw-1 from Caenorhabditis elegans.